The primary structure comprises 165 residues: 6,7-dimethyl-8-ribityllumazine synthase (165 aa).

5-amino-6-(D-ribitylamino)uracil-binding positions include Tyr-30, 61-63 (ALE), and 90-92 (VVI). Position 95–96 (95–96 (ET)) interacts with (2S)-2-hydroxy-3-oxobutyl phosphate. The active-site Proton donor is His-98. A 5-amino-6-(D-ribitylamino)uracil-binding site is contributed by Asn-123. Arg-137 contacts (2S)-2-hydroxy-3-oxobutyl phosphate.

It belongs to the DMRL synthase family.

The enzyme catalyses (2S)-2-hydroxy-3-oxobutyl phosphate + 5-amino-6-(D-ribitylamino)uracil = 6,7-dimethyl-8-(1-D-ribityl)lumazine + phosphate + 2 H2O + H(+). The protein operates within cofactor biosynthesis; riboflavin biosynthesis; riboflavin from 2-hydroxy-3-oxobutyl phosphate and 5-amino-6-(D-ribitylamino)uracil: step 1/2. In terms of biological role, catalyzes the formation of 6,7-dimethyl-8-ribityllumazine by condensation of 5-amino-6-(D-ribitylamino)uracil with 3,4-dihydroxy-2-butanone 4-phosphate. This is the penultimate step in the biosynthesis of riboflavin. The protein is 6,7-dimethyl-8-ribityllumazine synthase of Xanthobacter autotrophicus (strain ATCC BAA-1158 / Py2).